A 120-amino-acid chain; its full sequence is UPF0231 protein YacL (120 aa).

It belongs to the UPF0231 family.

In Escherichia coli O81 (strain ED1a), this protein is UPF0231 protein YacL.